The sequence spans 1191 residues: Major DNA-binding protein (1191 aa).

The disordered stretch occupies residues 288-307 (ETTKGQSKMGKREGSDVSGG). Residues 498–511 (CELCDKTSRIYCAH) fold into a zinc finger. Positions 841–842 (FW) match the Required for filament formation motif. A required for nuclear localization region spans residues 1166–1191 (KRPNMNVFDLEPIPEKRVPVLSVDML).

Belongs to the herpesviridae major DNA-binding protein family. As to quaternary structure, homooligomers. Forms double-helical filaments necessary for the formation of replication compartments within the host nucleus. Interacts with the origin-binding protein. Interacts with the helicase primase complex; this interaction stimulates primer synthesis activity of the helicase-primase complex. Interacts with the DNA polymerase. Interacts with the alkaline exonuclease; this interaction increases its nuclease processivity.

It is found in the host nucleus. In terms of biological role, plays several crucial roles in viral infection. Participates in the opening of the viral DNA origin to initiate replication by interacting with the origin-binding protein. May disrupt loops, hairpins and other secondary structures present on ssDNA to reduce and eliminate pausing of viral DNA polymerase at specific sites during elongation. Promotes viral DNA recombination by performing strand-transfer, characterized by the ability to transfer a DNA strand from a linear duplex to a complementary single-stranded DNA circle. Can also catalyze the renaturation of complementary single strands. Additionally, reorganizes the host cell nucleus, leading to the formation of prereplicative sites and replication compartments. This process is driven by the protein which can form double-helical filaments in the absence of DNA. In Gallid herpesvirus 2 (strain Chicken/Md5/ATCC VR-987) (GaHV-2), this protein is Major DNA-binding protein.